The following is a 1043-amino-acid chain: Sarcoplasmic/endoplasmic reticulum calcium ATPase 2 (1043 aa).

Residues 1–48 lie on the Cytoplasmic side of the membrane; the sequence is MENAHTKTVEEVLGHFGVNESTGLSLEQVKKLKERWGSNELPAEEGKT. The residue at position 38 (Ser38) is a Phosphoserine. The helical transmembrane segment at 49–69 threads the bilayer; that stretch reads LLELVIEQFEDLLVRILLLAA. Residues 70 to 89 lie on the Lumenal side of the membrane; sequence CISFVLAWFEEGEETITAFV. The chain crosses the membrane as a helical span at residues 90–110; that stretch reads EPFVILLILVANAIVGVWQER. Topologically, residues 111–253 are cytoplasmic; that stretch reads NAENAIEALK…QERTPLQQKL (143 aa). The chain crosses the membrane as a helical span at residues 254-273; it reads DEFGEQLSKVISLICIAVWI. Residues 274–295 are Lumenal-facing; it reads INIGHFNDPVHGGSWIRGAIYY. 2 positions are modified to 3'-nitrotyrosine: Tyr294 and Tyr295. Residues 296–313 form a helical membrane-spanning segment; sequence FKIAVALAVAAIPEGLPA. Residues Val304, Ala305, Ile307, and Glu309 each coordinate Ca(2+). The Cytoplasmic portion of the chain corresponds to 314–756; that stretch reads VITTCLALGT…EEGRAIYNNM (443 aa). Residue Asp351 is the 4-aspartylphosphate intermediate of the active site. The Mg(2+) site is built by Asp351 and Thr353. Thr353 serves as a coordination point for ATP. Thr441 bears the Phosphothreonine mark. ATP contacts are provided by Glu442, Arg489, and Lys514. A Phosphoserine modification is found at Ser531. An ATP-binding site is contributed by Arg559. The segment at 575–594 is interaction with HAX1; the sequence is MHLEDSANFIKYETNLTFVG. Ser580 bears the Phosphoserine mark. Thr624, Gly625, and Asp626 together coordinate ATP. Residues Ser661 and Ser663 each carry the phosphoserine modification. Residues Arg677 and Lys683 each coordinate ATP. Asp702 is a binding site for Mg(2+). Asn705 is an ATP binding site. A helical membrane pass occupies residues 757 to 776; the sequence is KQFIRYLISSNVGEVVCIFL. 2 residues coordinate Ca(2+): Asn767 and Glu770. The Lumenal portion of the chain corresponds to 777 to 786; the sequence is TAALGFPEAL. The helical transmembrane segment at 787–807 threads the bilayer; sequence IPVQLLWVNLVTDGLPATALG. Residues 787 to 807 are interaction with PLN; the sequence is IPVQLLWVNLVTDGLPATALG. The tract at residues 788 to 1043 is interaction with TMEM64 and PDIA3; sequence PVQLLWVNLV…DTNFSDMFWS (256 aa). Ca(2+) contacts are provided by Asn795, Thr798, and Asp799. At 808-827 the chain is on the cytoplasmic side; it reads FNPPDLDIMNKPPRNPKEPL. The helical transmembrane segment at 828 to 850 threads the bilayer; sequence ISGWLFFRYLAIGCYVGAATVGA. Over 851 to 896 the chain is Lumenal; it reads AAWWFIAADGGPRVSFYQLSHFLQCKEDNPDFEGVDCAIFESPYPM. Cys875 and Cys887 form a disulfide bridge. The helical transmembrane segment at 897–916 threads the bilayer; the sequence is TMALSVLVTIEMCNALNSLS. Residue Glu907 participates in Ca(2+) binding. Residues 917–929 lie on the Cytoplasmic side of the membrane; sequence ENQSLLRMPPWEN. A helical transmembrane segment spans residues 930 to 948; sequence IWLVGSICLSMSLHFLILY. Residues 931–942 form an interaction with PLN region; that stretch reads WLVGSICLSMSL. At 949 to 963 the chain is on the lumenal side; the sequence is VEPLPLIFQITPLNL. The helical transmembrane segment at 964–984 threads the bilayer; the sequence is TQWLMVLKISLPVILMDETLK. Residues 985–1043 lie on the Cytoplasmic side of the membrane; the sequence is FVARNYLEPGKECAQPATKPSCSLSACTDGISWPFVLLIMPLVVWVYSTDTNFSDMFWS.

This sequence belongs to the cation transport ATPase (P-type) (TC 3.A.3) family. Type IIA subfamily. In terms of assembly, interacts with sarcolipin (SLN); the interaction inhibits ATP2A2 Ca(2+) affinity. Interacts with phospholamban (PLN); the interaction inhibits ATP2A2 Ca(2+) affinity. Interacts with myoregulin (MRLN). Interacts with ARLN and ERLN; the interactions inhibit ATP2A2 Ca(2+) affinity. Interacts with STRIT1/DWORF; the interaction results in activation of ATP2A2. Interacts with the monomeric forms of SLN, PLN, ARLN, ERLN and STRI1/DWORF. Interacts with HAX1. Interacts with S100A8 and S100A9. Interacts with SLC35G1 and STIM1. Interacts with TMEM203. Interacts with TMEM64 and PDIA3. Interacts with TMX1. Interacts with TMX2. Interacts with VMP1; VMP1 competes with PLN and SLN to prevent them from forming an inhibitory complex with ATP2A2. Interacts with ULK1. Interacts with S100A1 in a Ca(2+)-dependent manner. Interacts with TUNAR. Interacts with FLVCR2; this interaction occurs in the absence of heme and promotes ATP2A2 proteasomal degradation; this complex is dissociated upon heme binding. Interacts with FNIP1. Interacts with TRAM2 (via C-terminus). The cofactor is Mg(2+). Post-translationally, nitrated under oxidative stress. Nitration on the two tyrosine residues inhibits catalytic activity. Serotonylated on Gln residues by TGM2 in response to hypoxia, leading to its inactivation. As to expression, isoform 2 is highly expressed in heart and slow twitch skeletal muscle. Isoform 1 is widely expressed.

The protein resides in the endoplasmic reticulum membrane. Its subcellular location is the sarcoplasmic reticulum membrane. It carries out the reaction Ca(2+)(in) + ATP + H2O = Ca(2+)(out) + ADP + phosphate + H(+). Has different conformational states with differential Ca2+ affinity. The E1 conformational state (active form) shows high Ca(2+) affinity, while the E2 state exhibits low Ca(2+) affinity. Binding of ATP allosterically increases its affinity for subsequent binding of Ca2+. Reversibly inhibited by phospholamban (PLN) at low calcium concentrations. PLN inhibits ATP2A2 Ca(2+) affinity by disrupting its allosteric activation by ATP. Inhibited by sarcolipin (SLN) and myoregulin (MRLN). The inhibition is blocked by VMP1. Enhanced by STRIT1/DWORF; STRIT1 increases activity by displacing sarcolipin (SLN), phospholamban (PLN) and myoregulin (MRLN). Stabilizes SERCA2 in its E2 state. This magnesium-dependent enzyme catalyzes the hydrolysis of ATP coupled with the translocation of calcium from the cytosol to the sarcoplasmic reticulum lumen. Involved in autophagy in response to starvation. Upon interaction with VMP1 and activation, controls ER-isolation membrane contacts for autophagosome formation. Also modulates ER contacts with lipid droplets, mitochondria and endosomes. In coordination with FLVCR2 mediates heme-stimulated switching from mitochondrial ATP synthesis to thermogenesis. In terms of biological role, involved in the regulation of the contraction/relaxation cycle. Acts as a regulator of TNFSF11-mediated Ca(2+) signaling pathways via its interaction with TMEM64 which is critical for the TNFSF11-induced CREB1 activation and mitochondrial ROS generation necessary for proper osteoclast generation. Association between TMEM64 and SERCA2 in the ER leads to cytosolic Ca(2+) spiking for activation of NFATC1 and production of mitochondrial ROS, thereby triggering Ca(2+) signaling cascades that promote osteoclast differentiation and activation. This is Sarcoplasmic/endoplasmic reticulum calcium ATPase 2 (Atp2a2) from Rattus norvegicus (Rat).